Consider the following 796-residue polypeptide: DNA damage-responsive transcriptional repressor RPH1 (796 aa).

Residues 14–55 (VPVFKPTYEQFEDFYAYCKAINKYGMKSGVVKVIPPKEWKDK) form the JmjN domain. Residues 193–355 (PEGLNVWNVA…IGKKAGKCHC (163 aa)) enclose the JmjC domain. Threonine 399 is subject to Phosphothreonine. 6 positions are modified to phosphoserine: serine 430, serine 459, serine 557, serine 561, serine 575, and serine 584. A Bipartite nuclear localization signal motif is present at residues 455 to 471 (KRISSFQEQPLNKLLKR). Residues 599 to 692 (RQQHSQQHSF…DKEQGSSPLN (94 aa)) form a disordered region. The span at 601 to 621 (QHSQQHSFSTPSTVSNLSTSV) shows a compositional bias: polar residues. The span at 629–640 (NDIKTPHPERPN) shows a compositional bias: basic and acidic residues. Serine 652 bears the Phosphoserine mark. A compositionally biased stretch (polar residues) spans 654–669 (VETSKSNLILSKVAST). Residues 670-686 (RQEDSFTSRNDDLDKEQ) are compositionally biased toward basic and acidic residues. Residue serine 689 is modified to Phosphoserine. A C2H2-type 1 zinc finger spans residues 709-732 (YICKECQRKFSSGHHLTRHKKSVH). Residues 738 to 763 (HSCPKCGKRFKRRDHVLQHLNKKIPC) form a C2H2-type 2; atypical zinc finger. Residues 774-796 (IMNPTVQPQDGKAAINQQSTPLN) are disordered.

RAD53-dependent phosphorylated in response to DNA damage.

It is found in the nucleus. In terms of biological role, transcriptional repressor of photolyase PHR1. Recognizes and binds the sequence AG(4) in the upstream repressing sequence of PHR1. Derepresses PHR1 transcription when phosphorylated. The protein is DNA damage-responsive transcriptional repressor RPH1 (RPH1) of Saccharomyces cerevisiae (strain ATCC 204508 / S288c) (Baker's yeast).